The primary structure comprises 775 residues: Suppressor of glycerol defect protein 1 (775 aa).

Composition is skewed to basic residues over residues 1–11 (MRPIKKSRSLK) and 28–49 (RRGKRNHNLPHREKRKFARISR). Disordered regions lie at residues 1–101 (MRPI…LLDP) and 152–253 (IDDI…GGDK). 3 stretches are compositionally biased toward basic and acidic residues: residues 52–79 (NGYENRKITEEGDSKSSELNDDYLDAHR), 177–193 (TGDHGSVDELESEREGN), and 209–223 (DEFHQPETKPIRMDP). The MIF4G domain maps to 262–463 (RRKLQGSLNK…ESITNLKENK (202 aa)). The region spanning 565–689 (TLRTSIFVAL…PLTILKHVDF (125 aa)) is the MI domain.

The protein belongs to the CWC22 family.

The protein localises to the nucleus. It is found in the nucleolus. Functionally, involved in osmoregulatory glycerol response. This is Suppressor of glycerol defect protein 1 (sgd1) from Schizosaccharomyces pombe (strain 972 / ATCC 24843) (Fission yeast).